Consider the following 437-residue polypeptide: Methylenetetrahydrofolate--tRNA-(uracil-5-)-methyltransferase TrmFO (437 aa).

FAD is bound at residue 10-15 (GAGLAG).

Belongs to the MnmG family. TrmFO subfamily. FAD serves as cofactor.

It is found in the cytoplasm. The enzyme catalyses uridine(54) in tRNA + (6R)-5,10-methylene-5,6,7,8-tetrahydrofolate + NADH + H(+) = 5-methyluridine(54) in tRNA + (6S)-5,6,7,8-tetrahydrofolate + NAD(+). It catalyses the reaction uridine(54) in tRNA + (6R)-5,10-methylene-5,6,7,8-tetrahydrofolate + NADPH + H(+) = 5-methyluridine(54) in tRNA + (6S)-5,6,7,8-tetrahydrofolate + NADP(+). Catalyzes the folate-dependent formation of 5-methyl-uridine at position 54 (M-5-U54) in all tRNAs. The polypeptide is Methylenetetrahydrofolate--tRNA-(uracil-5-)-methyltransferase TrmFO (Brevibacillus brevis (strain 47 / JCM 6285 / NBRC 100599)).